Reading from the N-terminus, the 194-residue chain is Probable GTP-binding protein EngB (194 aa).

Residues 22–194 (DLPEFALAGR…KFWDWIEDKM (173 aa)) enclose the EngB-type G domain. Residues 30 to 37 (GRSNVGKS), 57 to 61 (GKTQT), 75 to 78 (DVPG), 142 to 145 (TKMD), and 175 to 177 (FSS) contribute to the GTP site. Mg(2+) is bound by residues Ser-37 and Thr-59.

Belongs to the TRAFAC class TrmE-Era-EngA-EngB-Septin-like GTPase superfamily. EngB GTPase family. Requires Mg(2+) as cofactor.

Necessary for normal cell division and for the maintenance of normal septation. This is Probable GTP-binding protein EngB from Lactobacillus gasseri (strain ATCC 33323 / DSM 20243 / BCRC 14619 / CIP 102991 / JCM 1131 / KCTC 3163 / NCIMB 11718 / NCTC 13722 / AM63).